The sequence spans 506 residues: D-alanine--D-alanyl carrier protein ligase (506 aa).

ATP is bound at residue Thr152–Ser153. Asp197 is a D-alanine binding site. Residue Asn292–Thr297 participates in ATP binding. Val301 is a D-alanine binding site. Residues Asp383, Tyr395–Arg398, and Lys494 contribute to the ATP site. Lys494 contributes to the D-alanine binding site.

The protein belongs to the ATP-dependent AMP-binding enzyme family. DltA subfamily.

The protein resides in the cytoplasm. The catalysed reaction is holo-[D-alanyl-carrier protein] + D-alanine + ATP = D-alanyl-[D-alanyl-carrier protein] + AMP + diphosphate. It functions in the pathway cell wall biogenesis; lipoteichoic acid biosynthesis. In terms of biological role, catalyzes the first step in the D-alanylation of lipoteichoic acid (LTA), the activation of D-alanine and its transfer onto the D-alanyl carrier protein (Dcp) DltC. In an ATP-dependent two-step reaction, forms a high energy D-alanyl-AMP intermediate, followed by transfer of the D-alanyl residue as a thiol ester to the phosphopantheinyl prosthetic group of the Dcp. D-alanylation of LTA plays an important role in modulating the properties of the cell wall in Gram-positive bacteria, influencing the net charge of the cell wall. This chain is D-alanine--D-alanyl carrier protein ligase, found in Lacticaseibacillus rhamnosus (Lactobacillus rhamnosus).